The chain runs to 479 residues: Transcription factor CP2-like protein 1 (479 aa).

The 238-residue stretch at 43–280 folds into the Grh/CP2 DB domain; it reads RLPPLQYVLC…PSPSYNGSPN (238 aa). Disordered stretches follow at residues 219–245 and 271–301; these read KPKGADRKQKTDREKMEKRTAQEKEKY and PSPSYNGSPNSFGLGEGNASPTHPVEALPVG. Basic and acidic residues predominate over residues 221–245; that stretch reads KGADRKQKTDREKMEKRTAQEKEKY. An SAM2-like domain region spans residues 261 to 365; it reads PDVAYQVNSA…IRLFNAIKGR (105 aa). Positions 271–281 are enriched in polar residues; that stretch reads PSPSYNGSPNS.

The protein belongs to the grh/CP2 family. CP2 subfamily. As to quaternary structure, forms homohexamers via its SAM-like domain. Interacts with MTA1; which is indispensable for TFCP2l1-mediated self-renewal-promoting effect and endoderm-inhibiting action. In terms of tissue distribution, highly expressed in placental JEG-3 cells and very low levels of expression in non-steroidogenic cells. No expression was seen in adrenal NCI-H295A cells or in adrenal tissue.

The protein resides in the nucleus. In terms of biological role, transcription factor that facilitates establishment and maintenance of pluripotency in embryonic stem cells (ESCs). With KLF2, acts as the major effector of self-renewal that mediates induction of pluripotency downstream of LIF/STAT3 and Wnt/beta-catenin signaling. Required for normal duct development in the salivary gland and kidney. Coordinates the development of the kidney collecting ducts intercalated (IC) and principal (PC) cells, which regulate acid-base and salt-water homeostasis, respectively. Regulates the expression of IC genes including subunits B1 and D2 of the V-ATPase complex, OXGR1, CA12, SLC4A1, AQP6 and IC-specific transcription factor FOXI1. Also regulates the expression of JAG1 and subsequent notch signaling in the collecting duct. JAG1 initiates notch signaling in PCs but inhibits notch signaling in ICs. Acts as a transcriptional suppressor that may suppress UBP1-mediated transcriptional activation. Modulates the placental expression of CYP11A1. The protein is Transcription factor CP2-like protein 1 (TFCP2L1) of Homo sapiens (Human).